The chain runs to 631 residues: Glutamyl-tRNA(Gln) amidotransferase subunit E (631 aa).

The protein belongs to the GatB/GatE family. GatE subfamily. In terms of assembly, heterodimer of GatD and GatE.

It carries out the reaction L-glutamyl-tRNA(Gln) + L-glutamine + ATP + H2O = L-glutaminyl-tRNA(Gln) + L-glutamate + ADP + phosphate + H(+). In terms of biological role, allows the formation of correctly charged Gln-tRNA(Gln) through the transamidation of misacylated Glu-tRNA(Gln) in organisms which lack glutaminyl-tRNA synthetase. The reaction takes place in the presence of glutamine and ATP through an activated gamma-phospho-Glu-tRNA(Gln). The GatDE system is specific for glutamate and does not act on aspartate. This chain is Glutamyl-tRNA(Gln) amidotransferase subunit E, found in Methanococcus maripaludis (strain C6 / ATCC BAA-1332).